The primary structure comprises 872 residues: Cilia- and flagella-associated protein 58 (872 aa).

Coiled-coil stretches lie at residues 106–595 (VDSA…ADGE) and 642–839 (ESQY…QKNK).

It belongs to the CFAP58 family. In terms of assembly, interacts with ODFP2.

It localises to the cell projection. It is found in the cilium. The protein resides in the flagellum. The protein localises to the cytoplasm. Its subcellular location is the cytoskeleton. It localises to the microtubule organizing center. It is found in the centrosome. Functionally, has an essential role in the assembly and organization of the sperm flagellar axoneme. Required for the elongation of the primary cilium and sperm flagellar midpiece via modulation of the Notch signaling pathway. This chain is Cilia- and flagella-associated protein 58, found in Homo sapiens (Human).